The primary structure comprises 617 residues: Protein DWARF AND LOW-TILLERING (617 aa).

Disordered regions lie at residues 29–92 and 159–206; these read KRGS…HDED and PSLA…GVPA. Over residues 171–187 the composition is skewed to low complexity; sequence KSPSDSSSSSGTDGGSS. The GRAS domain occupies 208–594; that stretch reads GQAEREALEL…QPLYTVTAWT (387 aa). The leucine repeat I (LRI) stretch occupies residues 215–295; the sequence is LELVRALTAC…LTDDAFGGGD (81 aa). Positions 301-366 are VHIID; sequence LRILNAITPI…VPPAHVRITG (66 aa). The VHIID signature appears at 332-336; that stretch reads VHVID. The leucine repeat II (LRII) stretch occupies residues 376–408; sequence ETGARLARVAAALGLAFEFHAVVDRLEDVRLWM. Positions 417-508 are PFYRE; it reads VAVNCVLAMH…EEMFAREIRN (92 aa). Residues 511-594 form an SAW region; sequence AFEGPERFER…QPLYTVTAWT (84 aa). The interval 596–617 is disordered; it reads AGDGAGGSTVSASTTASHSQQS. Low complexity predominate over residues 603-617; that stretch reads STVSASTTASHSQQS.

Belongs to the GRAS family. Interacts with GSK2. Interacts with SMOS1 (via C-terminus). Post-translationally, phosphorylated on serine and threonine residues by GSK2. Dephosphorylated during response to brassinosteroid. Expressed in the shoot apical meristem (SAM) and elongating cells of young seedlings. Expressed in leaf joints, culms, internodes, stems, young panicles, primary roots and lateral roots.

The protein resides in the nucleus. Probable transcription factor that acts as a positive regulator of brassinosteroid (BR) signaling. Functions downstream of BRI1 and GSK2 to modulate BR responses. Acts as a direct target of GSK2 kinase to mediate BR responses. Involved in feedback inhibition of BR biosynthetic genes. Repressed by BZR1. Cooperatively functions in a transactivating complex with SMOS1 to enhance the transcription of the SMOS1 target PHI-1, and regulate plant organ size. Interaction between SMOS1 and DLT is a crosstalk point for auxin and brassinosteroid signaling. The protein is Protein DWARF AND LOW-TILLERING of Oryza sativa subsp. japonica (Rice).